We begin with the raw amino-acid sequence, 95 residues long: Integration host factor subunit beta (95 aa).

Belongs to the bacterial histone-like protein family. In terms of assembly, heterodimer of an alpha and a beta chain.

Its function is as follows. This protein is one of the two subunits of integration host factor, a specific DNA-binding protein that functions in genetic recombination as well as in transcriptional and translational control. This is Integration host factor subunit beta from Shewanella putrefaciens (strain CN-32 / ATCC BAA-453).